We begin with the raw amino-acid sequence, 457 residues long: Peptidyl-prolyl cis-trans isomerase FKBP5 (457 aa).

M1 carries the post-translational modification N-acetylmethionine. The segment covering 1-11 (MTTDEGAKNSR) has biased composition (basic and acidic residues). The disordered stretch occupies residues 1-27 (MTTDEGAKNSRENPTATVAEQGEDVTS). K28 is subject to N6-acetyllysine. PPIase FKBP-type domains lie at 50–138 (GDKV…LDFK) and 165–251 (GARV…KSFE). TPR repeat units follow at residues 268 to 301 (AAIVKEKGTLYFKGGKYVQAVIQYGKIVSWLEME), 317 to 350 (LAAFLNLAMCYLKLREYTKAVECCDKALGLDSAN), and 351 to 384 (EKGLYRRGEAQLLMNEFESAKGDFEKVLEVNPQN). A disordered region spans residues 423 to 457 (EEANKAMSKKTSEGVTNEKLAVSHAVEEEKPEGHV). S445 carries the phosphoserine modification. Basic and acidic residues predominate over residues 447–457 (AVEEEKPEGHV).

As to quaternary structure, part of a heteromultimeric cytoplasmic complex with HSP90AA1, HSPA1A/HSPA1B and steroid receptors. Upon ligand binding dissociates from the complex and FKBP4 takes its place. Interacts with functionally mature heterooligomeric progesterone receptor complexes along with HSP90 and TEBP. Interacts with NR3C1. Interacts with Akt/AKT1 and PHLPP1; enhancing dephosphorylation and subsequent activation of Akt/AKT1. Interacts with IFI44L; this interaction modulates the kinase activity of IKBKB and IKBKE. Interacts with IKBKB and IKBKE. Acetylation impairs ability to promote interaction between Akt/AKT1 and PHLPP1. Deacetylation by SIRT7 promotes interaction between Akt/AKT1 and PHLPP1, leading to suppress Akt/AKT1 activation. Post-translationally, ubiquitinated, leading to degradation in a proteasome-dependent manner. Deubiquitinated by USP49, leading to stabilization.

The protein resides in the cytoplasm. Its subcellular location is the nucleus. The catalysed reaction is [protein]-peptidylproline (omega=180) = [protein]-peptidylproline (omega=0). With respect to regulation, inhibited by both FK506 and rapamycin. In terms of biological role, immunophilin protein with PPIase and co-chaperone activities. Component of unligated steroid receptors heterocomplexes through interaction with heat-shock protein 90 (HSP90). Plays a role in the intracellular trafficking of heterooligomeric forms of steroid hormone receptors maintaining the complex into the cytoplasm when unliganded. Acts as a regulator of Akt/AKT1 activity by promoting the interaction between Akt/AKT1 and PHLPP1, thereby enhancing dephosphorylation and subsequent activation of Akt/AKT1. Interacts with IKBKE and IKBKB which facilitates IKK complex assembly leading to increased IKBKE and IKBKB kinase activity, NF-kappaB activation, and IFN production. The sequence is that of Peptidyl-prolyl cis-trans isomerase FKBP5 (FKBP5) from Aotus nancymaae (Ma's night monkey).